A 290-amino-acid chain; its full sequence is uncharacterized protein (290 aa).

2 disordered regions span residues 105–156 and 259–290; these read LKHK…KLTV and EGAQ…KSKK. Positions 114 to 130 are enriched in polar residues; it reads KATQQARKRNFISSKSK. 2 stretches are compositionally biased toward basic and acidic residues: residues 143-156 and 261-280; these read RESK…KLTV and AQRD…EPVL.

This is an uncharacterized protein from Homo sapiens (Human).